A 92-amino-acid polypeptide reads, in one-letter code: Non-specific lipid-transfer protein 1 (92 aa).

Intrachain disulfides connect Cys-4–Cys-52, Cys-14–Cys-28, Cys-29–Cys-74, and Cys-50–Cys-88.

This sequence belongs to the plant LTP family. Expressed in seeds and, at very low levels, in pulp of fruit (at protein level).

Its function is as follows. Plant non-specific lipid-transfer proteins transfer phospholipids as well as galactolipids across membranes. May play a role in wax or cutin deposition in the cell walls of expanding epidermal cells and certain secretory tissues. The polypeptide is Non-specific lipid-transfer protein 1 (Actinidia deliciosa (Kiwi)).